Here is a 311-residue protein sequence, read N- to C-terminus: tRNA dimethylallyltransferase (311 aa).

11–18 provides a ligand contact to ATP; it reads GPTASGKS. Substrate is bound at residue 13–18; the sequence is TASGKS. 2 interaction with substrate tRNA regions span residues 36–39 and 160–164; these read DSMQ and QRLIR.

The protein belongs to the IPP transferase family. Monomer. It depends on Mg(2+) as a cofactor.

It carries out the reaction adenosine(37) in tRNA + dimethylallyl diphosphate = N(6)-dimethylallyladenosine(37) in tRNA + diphosphate. In terms of biological role, catalyzes the transfer of a dimethylallyl group onto the adenine at position 37 in tRNAs that read codons beginning with uridine, leading to the formation of N6-(dimethylallyl)adenosine (i(6)A). The sequence is that of tRNA dimethylallyltransferase from Rickettsia typhi (strain ATCC VR-144 / Wilmington).